The chain runs to 181 residues: Acetolactate synthase small subunit (181 aa).

In terms of domain architecture, ACT spans 4 to 78; it reads TLSVLVEDES…NVLKIQDITN (75 aa).

Belongs to the acetolactate synthase small subunit family. Dimer of large and small chains.

It localises to the plastid. The protein localises to the chloroplast. It catalyses the reaction 2 pyruvate + H(+) = (2S)-2-acetolactate + CO2. It participates in amino-acid biosynthesis; L-isoleucine biosynthesis; L-isoleucine from 2-oxobutanoate: step 1/4. Its pathway is amino-acid biosynthesis; L-valine biosynthesis; L-valine from pyruvate: step 1/4. The polypeptide is Acetolactate synthase small subunit (ilvH) (Galdieria sulphuraria (Red alga)).